The chain runs to 831 residues: Multiphosphoryl transfer protein 1 (831 aa).

Residues Met1–Ser90 enclose the HPr domain. The active-site Pros-phosphohistidine intermediate; for HPr activity is the His15. At His15 the chain carries Phosphohistidine; by EI. The segment at Gly119–Asp650 is PTS EI. His298 serves as the catalytic Tele-phosphohistidine intermediate; for PTS EI activity. His298 bears the Phosphohistidine; by autocatalysis mark. The phosphoenolpyruvate site is built by Arg405 and Arg441. Glu540 and Asp564 together coordinate Mg(2+). Residues Asn563–Asp564 and Arg574 each bind phosphoenolpyruvate. Cys611 acts as the Proton donor; for EI activity in catalysis. One can recognise a PTS EIIA type-2 domain in the interval Pro685–Glu828. Residue His747 is the Tele-phosphohistidine intermediate; for PTS EIIA activity of the active site. His747 carries the phosphohistidine; by HPr modification.

The protein belongs to the PEP-utilizing enzyme family. Mg(2+) serves as cofactor.

The protein resides in the cytoplasm. The catalysed reaction is L-histidyl-[protein] + phosphoenolpyruvate = N(pros)-phospho-L-histidyl-[protein] + pyruvate. It carries out the reaction D-fructose(out) + N(pros)-phospho-L-histidyl-[protein] = D-fructose 1-phosphate(in) + L-histidyl-[protein]. Multifunctional protein that includes general (non sugar-specific) and sugar-specific components of the phosphoenolpyruvate-dependent sugar phosphotransferase system (sugar PTS). This major carbohydrate active transport system catalyzes the phosphorylation of incoming sugar substrates concomitantly with their translocation across the cell membrane. The enzyme II FryABC PTS system is involved in fructose transport. This is Multiphosphoryl transfer protein 1 (fryA) from Escherichia coli (strain K12).